The following is a 561-amino-acid chain: Cytochrome P450 monooxygenase avaL (561 aa).

The chain crosses the membrane as a helical span at residues 19–39 (IAASCALVCIVSACYVVWSLL). Heme is bound at residue C508.

Belongs to the cytochrome P450 family. It depends on heme as a cofactor.

It localises to the membrane. Its pathway is secondary metabolite biosynthesis. In terms of biological role, cytochrome P450 monooxygenase; part of the cluster that mediates the biosynthesis of a highly modified cyclo-arginine-tryptophan dipeptide (cRW). The first step of the pathway is perfornmed by the arginine-containing cyclodipeptide synthase (RCPDS) avaA that acts as the scaffold-generating enzyme and is responsible for formation of the cyclo-Arg-Trp (cRW) diketopiperazine. AvaB then acts as a multifunctional flavoenzyme that is responsible for generating the cyclo-Arg-formylkynurenine DKP, which can be deformylated by avaC. AvaB then further catalyzes an additional N-oxidation followed by cyclization and dehydration. The next step is an N-acetylation of the guanidine group catalyzed by the arginine N-acetyltransferase avaD. The roles of the additional enzymes identified within the ava cluster still have to be determined. This is Cytochrome P450 monooxygenase avaL from Aspergillus versicolor.